We begin with the raw amino-acid sequence, 398 residues long: Acetate kinase (398 aa).

Residue N7 participates in Mg(2+) binding. Position 14 (K14) interacts with ATP. Substrate is bound at residue R96. The active-site Proton donor/acceptor is D153. ATP is bound by residues 210–214 (HLGNG), 284–286 (DLR), and 332–336 (GIGEH). E385 contacts Mg(2+).

The protein belongs to the acetokinase family. In terms of assembly, homodimer. Mg(2+) is required as a cofactor. Mn(2+) serves as cofactor.

Its subcellular location is the cytoplasm. The enzyme catalyses acetate + ATP = acetyl phosphate + ADP. It participates in metabolic intermediate biosynthesis; acetyl-CoA biosynthesis; acetyl-CoA from acetate: step 1/2. Functionally, catalyzes the formation of acetyl phosphate from acetate and ATP. Can also catalyze the reverse reaction. This chain is Acetate kinase, found in Acaryochloris marina (strain MBIC 11017).